The primary structure comprises 359 residues: Type II restriction enzyme HgiDI (359 aa).

The enzyme catalyses Endonucleolytic cleavage of DNA to give specific double-stranded fragments with terminal 5'-phosphates.. Its function is as follows. A P subtype restriction enzyme that recognizes the double-stranded sequence 5'-GRCGYC-3' and cleaves after R-2. The polypeptide is Type II restriction enzyme HgiDI (Herpetosiphon aurantiacus (Herpetosiphon giganteus)).